The sequence spans 591 residues: Inactive metallocarboxypeptidase ECM14 (591 aa).

The N-terminal stretch at 1–21 (MRLFSHLAVLAILACAVPITA) is a signal peptide. The propeptide occupies 22–175 (IPSFLSNSYP…QTIYESYPSS (154 aa)). A Peptidase M14 domain is found at 203–523 (DYQPFSVIVP…NAVMVLGRFL (321 aa)). Zn(2+)-binding residues include H265 and E268. Residues 265-268 (HARE), R323, and 340-341 (DR) each bind substrate. C334 and C357 are joined by a disulfide. N-linked (GlcNAc...) asparagine glycans are attached at residues N350, N381, and N386. H397 serves as a coordination point for Zn(2+). 398 to 399 (SY) contacts substrate. The disordered stretch occupies residues 533 to 591 (DWEDESQRPKADEDDIPSENELDENDDSWIPYDYRNHDDQNEGEGYDNDEWGFRRRRKR). Acidic residues-rich tracts occupy residues 544 to 559 (DEDD…ENDD) and 573 to 582 (NEGEGYDNDE).

The protein belongs to the peptidase M14 family. Requires Zn(2+) as cofactor.

Its subcellular location is the vacuole. The protein localises to the secreted. Its function is as follows. Inactive carboxypeptidase that may play a role in cell wall organization and biogenesis. In Paracoccidioides brasiliensis (strain Pb18), this protein is Inactive metallocarboxypeptidase ECM14 (ECM14).